The following is a 372-amino-acid chain: MTRAHNATLESIQYARGTLRLLDQRKLPFETVFDEILTVDDIWTAIKEMRVRGAPAIAVSAALAIAVAAGNELKKNDGACNSVDGTRRFLLESCDTVMTARPTAVNLSKTLIRLKRDIADVTANTAGGLVEACAVLAEKIYAEDVAYNEGIMRHGAAHVTQLVKKSKVSVITICNTGALATSRYGTALGVVRQLFYEGKLEQVYACETRPWNQGARLTVYECVQENIPFTLICDSAVSALMGSRPIDAVIVGADRICRNGDTANKIGTCNLAVAAAHYGVPFFVAAPSTTLDPMTADGESVVIEERETMELTHNMATQQRVVAEGPSLRIWNPVFDITPAALVTGGIITERGVLQPSATAPFFDITRIVGAS.

The Proton donor role is filled by aspartate 254.

It belongs to the eIF-2B alpha/beta/delta subunits family. MtnA subfamily.

The protein resides in the cytoplasm. Its subcellular location is the nucleus. The enzyme catalyses 5-(methylsulfanyl)-alpha-D-ribose 1-phosphate = 5-(methylsulfanyl)-D-ribulose 1-phosphate. It participates in amino-acid biosynthesis; L-methionine biosynthesis via salvage pathway; L-methionine from S-methyl-5-thio-alpha-D-ribose 1-phosphate: step 1/6. Catalyzes the interconversion of methylthioribose-1-phosphate (MTR-1-P) into methylthioribulose-1-phosphate (MTRu-1-P). The protein is Methylthioribose-1-phosphate isomerase 1 of Trypanosoma cruzi (strain CL Brener).